A 1069-amino-acid polypeptide reads, in one-letter code: Adenylate-forming reductase (1069 aa).

The tract at residues 20–391 (HPEDPKAVKS…WKLRQDINYR (372 aa)) is adenylation (A) domain. Residues His-262, 357 to 358 (AH), Thr-362, and 437 to 440 (AVGR) contribute to the AMP site. The Carrier domain occupies 576 to 656 (DSLEEDLKDL…KLGASLRHLA (81 aa)). Position 612 is an O-(pantetheine 4'-phosphoryl)serine (Ser-612). Residues 686 to 1032 (TVLLTGSTGN…TGKVILDTSR (347 aa)) are reductase (R) domain. NADP(+) is bound by residues 693–696 (TGNL), Arg-719, 785–787 (NAW), Tyr-863, and Lys-867.

The protein belongs to the adenylate-forming reductase family.

It carries out the reaction 5-methylorsellinate + ATP + NADPH + H(+) = 2,4-dihydroxy 5,6-dimethylbenzaldehyde + AMP + diphosphate + NADP(+). The protein operates within secondary metabolite biosynthesis. Non-canonical non-ribosomal peptide synthetase; part of the cluster A that mediates the biosynthesis of azasperpyranones, members of the azaphilone family that exhibit anti-cancer activities. Azasperpyranones are synthesized by 2 clusters, A and B. Cluster A is responsible for the production of the polyhydric phenol moiety while the azaphilonoid scaffold is produced by the cluster B. The non-reducing polyketide synthase ATEG_03629 produces 5-methyl orsellinic acid, which is then reduced to 5-methyl orsellinic aldehyde by the NRPS-like protein ATEG_03630. 5-methyl orsellinic aldehyde is then first hydroxylated by the FAD-dependent monooxygenase ATEG_03635 and subsequently hydroxylated by the cytochrome P450 monooxygenase ATEG_03631 to produce the unstable polyhydric phenol precursor of azasperpyranones. On the other hand, the polyketide synthase ATEG_07659 is responsible for producing the 3,5-dimethyloctadienone moiety from acetyl-CoA, three malonyl-CoA, and two S-adenosyl methionines (SAM). The 3,5-dimethyloctadienone moiety is then loaded onto the SAT domain of ATEG_07661 and extended with four malonyl-CoA and one SAM, which leads to the formation of 2,4-dihydroxy-6-(5,7-dimethyl-2-oxo-trans-3-trans-5-nonadienyl)-3-methylbenzaldehyde (compound 8) after reductive release and aldol condensation. The FAD-dependent monooxygenase ATEG_07662 is the next enzyme in the biosynthesis sequence and hydroxylates the side chain at the benzylic position of compound 8. In Aspergillus nidulans, afoF, the ortholog of the FAD-dependent oxygenase ATEG_07660, is the key enzyme for the biosynthesis of asperfuranone by catalyzing the hydroxylation at C-8 of to prevent the formation of a six-membered ring hemiacetal intermediate and thus facilitating the formation of a five-membered ring to produce asperfuranone. In Aspergillus terreus, ATEG_07660 is probably not functional, which leads to the formation of the six-membered ring hemiacetal intermediate presperpyranone instead of asperfuranone. Finally, ATEG_03636 is involved in the condensation of the polyhydric phenol moiety produced by cluster A and the perasperpyranone precursor produced by cluster B, to yield azasperpyranone A. Further modifications of azasperpyranone A result in the production of derivatives, including azasperpyranone B to F. The protein is Adenylate-forming reductase of Aspergillus terreus (strain NIH 2624 / FGSC A1156).